The sequence spans 504 residues: Arabinose import ATP-binding protein AraG (504 aa).

2 consecutive ABC transporter domains span residues 8–243 (LSFR…MVGR) and 256–499 (YGEE…MPKV). An ATP-binding site is contributed by 40-47 (GENGAGKS).

It belongs to the ABC transporter superfamily. Arabinose importer (TC 3.A.1.2.2) family. In terms of assembly, the complex is composed of two ATP-binding proteins (AraG), two transmembrane proteins (AraH) and a solute-binding protein (AraF).

The protein localises to the cell inner membrane. The catalysed reaction is L-arabinose(out) + ATP + H2O = L-arabinose(in) + ADP + phosphate + H(+). Its function is as follows. Part of the ABC transporter complex AraFGH involved in arabinose import. Responsible for energy coupling to the transport system. The chain is Arabinose import ATP-binding protein AraG from Escherichia coli O157:H7.